The primary structure comprises 779 residues: Mesenchyme-specific cell surface glycoprotein (779 aa).

The signal sequence occupies residues 1–15 (MQFGVPLLVLCLALG). N-linked (GlcNAc...) asparagine glycosylation is found at Asn-203 and Asn-234. The interval 249–363 (AGFPRGTTWS…QYPMIPTTPL (115 aa)) is disordered. The span at 262–351 (GAGGQGGQGQ…GGQGGQGGGN (90 aa)) shows a compositional bias: gly residues. 3 N-linked (GlcNAc...) asparagine glycosylation sites follow: Asn-369, Asn-451, and Asn-609.

In terms of tissue distribution, restricted to the primary mesenchyme cell lineage.

The protein localises to the cell membrane. Not known. Could be involved in mesenchyme cell migration, adhesion, fusion, or spicule formation. This is Mesenchyme-specific cell surface glycoprotein from Strongylocentrotus purpuratus (Purple sea urchin).